We begin with the raw amino-acid sequence, 100 residues long: Urease subunit gamma (100 aa).

Belongs to the urease gamma subunit family. Heterotrimer of UreA (gamma), UreB (beta) and UreC (alpha) subunits. Three heterotrimers associate to form the active enzyme.

The protein localises to the cytoplasm. The enzyme catalyses urea + 2 H2O + H(+) = hydrogencarbonate + 2 NH4(+). The protein operates within nitrogen metabolism; urea degradation; CO(2) and NH(3) from urea (urease route): step 1/1. The chain is Urease subunit gamma from Laribacter hongkongensis (strain HLHK9).